The sequence spans 213 residues: Large ribosomal subunit protein uL3 (213 aa).

The interval 131–155 (GRASHGNSVSHRAHGSTGNNQDPGR) is disordered. Positions 135 to 152 (HGNSVSHRAHGSTGNNQD) are enriched in polar residues. Gln-151 carries the post-translational modification N5-methylglutamine.

The protein belongs to the universal ribosomal protein uL3 family. In terms of assembly, part of the 50S ribosomal subunit. Forms a cluster with proteins L14 and L19. In terms of processing, methylated by PrmB.

In terms of biological role, one of the primary rRNA binding proteins, it binds directly near the 3'-end of the 23S rRNA, where it nucleates assembly of the 50S subunit. This is Large ribosomal subunit protein uL3 from Agrobacterium fabrum (strain C58 / ATCC 33970) (Agrobacterium tumefaciens (strain C58)).